Reading from the N-terminus, the 128-residue chain is UPF0102 protein RPB_0420 (128 aa).

This sequence belongs to the UPF0102 family.

This is UPF0102 protein RPB_0420 from Rhodopseudomonas palustris (strain HaA2).